The sequence spans 331 residues: tRNA-cytidine(32) 2-sulfurtransferase (331 aa).

Residues 1–31 (MNAPHMNDTTADAATLDATAAPAGRPALTRR) form a disordered region. Over residues 8-23 (DTTADAATLDATAAPA) the composition is skewed to low complexity. The short motif at 71–76 (SGGKDS) is the PP-loop motif element. Residues C146, C149, and C237 each contribute to the [4Fe-4S] cluster site.

The protein belongs to the TtcA family. In terms of assembly, homodimer. The cofactor is Mg(2+). [4Fe-4S] cluster serves as cofactor.

The protein resides in the cytoplasm. It catalyses the reaction cytidine(32) in tRNA + S-sulfanyl-L-cysteinyl-[cysteine desulfurase] + AH2 + ATP = 2-thiocytidine(32) in tRNA + L-cysteinyl-[cysteine desulfurase] + A + AMP + diphosphate + H(+). Its pathway is tRNA modification. Its function is as follows. Catalyzes the ATP-dependent 2-thiolation of cytidine in position 32 of tRNA, to form 2-thiocytidine (s(2)C32). The sulfur atoms are provided by the cysteine/cysteine desulfurase (IscS) system. The polypeptide is tRNA-cytidine(32) 2-sulfurtransferase (Burkholderia lata (strain ATCC 17760 / DSM 23089 / LMG 22485 / NCIMB 9086 / R18194 / 383)).